The primary structure comprises 86 residues: Large ribosomal subunit protein bL27 (86 aa).

Residues methionine 1–valine 23 are disordered.

Belongs to the bacterial ribosomal protein bL27 family.

This Prochlorococcus marinus (strain MIT 9515) protein is Large ribosomal subunit protein bL27.